A 550-amino-acid polypeptide reads, in one-letter code: Tyrosine-protein phosphatase 1 (550 aa).

The region spanning 260 to 539 (LYQKFLRLQS…KYVYDLIDSL (280 aa)) is the Tyrosine-protein phosphatase domain. Phosphoserine occurs at positions 318 and 320. The Phosphocysteine intermediate role is filled by C470.

This sequence belongs to the protein-tyrosine phosphatase family. Non-receptor class subfamily.

Its subcellular location is the cytoplasm. It catalyses the reaction O-phospho-L-tyrosyl-[protein] + H2O = L-tyrosyl-[protein] + phosphate. In terms of biological role, plays a role in inhibiting the onset of mitosis. Dephosphorylates sty1/spc1 and wis1/spc2/sty2. This Schizosaccharomyces pombe (strain 972 / ATCC 24843) (Fission yeast) protein is Tyrosine-protein phosphatase 1 (pyp1).